The chain runs to 463 residues: MKKILVVGDLIADYYLWGKSERLSPEAPVPVLEVKKESKNLGGAANVANNLISLKAKVFLCGVVGDDLEGKHFISALKARNIDTSGILTDKTRCTTLKTRIIAQNQQIARVDKEIKDPLNADLRKNLLDFITEKIQEIDGVILSDYNKGVLDFELTQTIITLANKHHKLILCDPKGKDYSKYSHASLITPNRFELEHALHLKLDSHASLSKALQILKETYQIAMPLVTLSEQGIAFLEQGELVNCPTIAKEVYDVTGAGDTVIASLTLSLLESMSLKDACEFANAAAAVVVGKMGSALASLEEIALILNQTHPKILPLEKLLETLEHNQQKIVFTNGCFDLLHKGHASYLQKAKALGDILIVGLNSDASVKRLKGDKRPIVSEKDRAFLLASLSCVDYVVVFEEDTPIQLIQALKPDILVKGADYLNKEVIGSEFAKETRLMEFGEGYSTSAIIEKIKRTCND.

Residues 1–311 are ribokinase; the sequence is MKKILVVGDL…EEIALILNQT (311 aa). Position 191 to 194 (191 to 194) interacts with ATP; it reads NRFE. Asp-260 is an active-site residue. The segment at 334–463 is cytidylyltransferase; it reads FTNGCFDLLH…IEKIKRTCND (130 aa).

The protein in the N-terminal section; belongs to the carbohydrate kinase PfkB family. It in the C-terminal section; belongs to the cytidylyltransferase family. In terms of assembly, homodimer.

It carries out the reaction D-glycero-beta-D-manno-heptose 7-phosphate + ATP = D-glycero-beta-D-manno-heptose 1,7-bisphosphate + ADP + H(+). The enzyme catalyses D-glycero-beta-D-manno-heptose 1-phosphate + ATP + H(+) = ADP-D-glycero-beta-D-manno-heptose + diphosphate. The protein operates within nucleotide-sugar biosynthesis; ADP-L-glycero-beta-D-manno-heptose biosynthesis; ADP-L-glycero-beta-D-manno-heptose from D-glycero-beta-D-manno-heptose 7-phosphate: step 1/4. It participates in nucleotide-sugar biosynthesis; ADP-L-glycero-beta-D-manno-heptose biosynthesis; ADP-L-glycero-beta-D-manno-heptose from D-glycero-beta-D-manno-heptose 7-phosphate: step 3/4. Catalyzes the phosphorylation of D-glycero-D-manno-heptose 7-phosphate at the C-1 position to selectively form D-glycero-beta-D-manno-heptose-1,7-bisphosphate. In terms of biological role, catalyzes the ADP transfer from ATP to D-glycero-beta-D-manno-heptose 1-phosphate, yielding ADP-D-glycero-beta-D-manno-heptose. The sequence is that of Bifunctional protein HldE from Helicobacter pylori (strain G27).